We begin with the raw amino-acid sequence, 893 residues long: Protein FAM186B (893 aa).

5 disordered regions span residues 177–207 (GWQGRSPQTSPSHPQPLSPEQMLQDQHTMNT), 327–376 (QAED…PSPM), 537–557 (LEKEQESPRREPEQLGEDVER), 574–611 (LSLVPAPSRTQSAHQSRRPHLPMSPSTQQPALGKQRPM), and 806–827 (KPKKCKLPAASPRHIRPSGPTY). Polar residues-rich tracts occupy residues 179 to 188 (QGRSPQTSPS) and 197 to 207 (QMLQDQHTMNT). A coiled-coil region spans residues 303–331 (RYHDLLLMKQALEFQLKKAQNATGQAEDL). A compositionally biased stretch (basic and acidic residues) spans 342–353 (SERETLPRKETV).

It belongs to the FAM186 family.

The sequence is that of Protein FAM186B (FAM186B) from Homo sapiens (Human).